Consider the following 304-residue polypeptide: Urease accessory protein UreD (304 aa).

The protein belongs to the UreD family. UreD, UreF and UreG form a complex that acts as a GTP-hydrolysis-dependent molecular chaperone, activating the urease apoprotein by helping to assemble the nickel containing metallocenter of UreC. The UreE protein probably delivers the nickel.

It is found in the cytoplasm. In terms of biological role, required for maturation of urease via the functional incorporation of the urease nickel metallocenter. In Haloquadratum walsbyi (strain DSM 16790 / HBSQ001), this protein is Urease accessory protein UreD.